Reading from the N-terminus, the 363-residue chain is Spermidine/putrescine import ATP-binding protein PotA 2 (363 aa).

The region spanning 6–236 (LEIRNVTRRF…PRSRFVADFI (231 aa)) is the ABC transporter domain. An ATP-binding site is contributed by 38–45 (GPSGCGKT).

The protein belongs to the ABC transporter superfamily. Spermidine/putrescine importer (TC 3.A.1.11.1) family. The complex is composed of two ATP-binding proteins (PotA), two transmembrane proteins (PotB and PotC) and a solute-binding protein (PotD).

The protein localises to the cell inner membrane. It catalyses the reaction ATP + H2O + polyamine-[polyamine-binding protein]Side 1 = ADP + phosphate + polyamineSide 2 + [polyamine-binding protein]Side 1.. Its function is as follows. Part of the ABC transporter complex PotABCD involved in spermidine/putrescine import. Responsible for energy coupling to the transport system. In Pseudomonas aeruginosa (strain ATCC 15692 / DSM 22644 / CIP 104116 / JCM 14847 / LMG 12228 / 1C / PRS 101 / PAO1), this protein is Spermidine/putrescine import ATP-binding protein PotA 2.